Consider the following 62-residue polypeptide: MSCFPVLFVMMLLVSQSVWAFPGPETRDGSVQDAESRRVRSAEEDCCENPVCKHTPGCPKGS.

Positions M1 to F21 are cleaved as a signal peptide. Residues P22–R38 constitute a propeptide that is removed on maturation.

Belongs to the teretoxin A (TA) superfamily. Post-translationally, contains 2 disulfide bonds. As to expression, expressed by the venom duct.

It is found in the secreted. This chain is Teretoxin Tan1.1, found in Terebra anilis (Auger snail).